The sequence spans 226 residues: V-type proton ATPase subunit E (226 aa).

This sequence belongs to the V-ATPase E subunit family. In terms of assembly, V-ATPase is a heteromultimeric enzyme composed of a peripheral catalytic V1 complex (components A to H) attached to an integral membrane V0 proton pore complex (components: a, c, c', c'', d, e, f and VOA1).

Its subcellular location is the vacuole membrane. Its function is as follows. Subunit of the V1 complex of vacuolar(H+)-ATPase (V-ATPase), a multisubunit enzyme composed of a peripheral complex (V1) that hydrolyzes ATP and a membrane integral complex (V0) that translocates protons. V-ATPase is responsible for acidifying and maintaining the pH of intracellular compartments. The sequence is that of V-type proton ATPase subunit E (VMA4) from Candida albicans (Yeast).